The following is a 120-amino-acid chain: U13-lycotoxin-Ls1d (120 aa).

The N-terminal stretch at 1-16 (MKILFVLISILYAVYC) is a signal peptide. Residues 17-54 (FSSEEDVDSAYLANELEPVEDINSEQYAALEPKEEQER) constitute a propeptide that is removed on maturation. Disulfide bonds link Cys56–Cys70, Cys63–Cys76, Cys69–Cys87, and Cys78–Cys85. The Agouti domain occupies 56–95 (CADMGQDCKDDCDCCLNIATCNCRFGRYFCSCTFGDYQTC).

Belongs to the neurotoxin 05 (agouti) family. Post-translationally, contains 6 disulfide bonds. Expressed by the venom gland.

Its subcellular location is the secreted. The protein is U13-lycotoxin-Ls1d of Lycosa singoriensis (Wolf spider).